The sequence spans 226 residues: Ribonuclease 3 (226 aa).

The 123-residue stretch at isoleucine 6–aspartate 128 folds into the RNase III domain. Residue glutamate 41 participates in Mg(2+) binding. Aspartate 45 is a catalytic residue. Mg(2+) contacts are provided by aspartate 114 and glutamate 117. Glutamate 117 is an active-site residue. The 71-residue stretch at aspartate 155–isoleucine 225 folds into the DRBM domain.

This sequence belongs to the ribonuclease III family. Homodimer. It depends on Mg(2+) as a cofactor.

The protein resides in the cytoplasm. The catalysed reaction is Endonucleolytic cleavage to 5'-phosphomonoester.. Functionally, digests double-stranded RNA. Involved in the processing of primary rRNA transcript to yield the immediate precursors to the large and small rRNAs (23S and 16S). Processes some mRNAs, and tRNAs when they are encoded in the rRNA operon. Processes pre-crRNA and tracrRNA of type II CRISPR loci if present in the organism. The chain is Ribonuclease 3 from Erwinia tasmaniensis (strain DSM 17950 / CFBP 7177 / CIP 109463 / NCPPB 4357 / Et1/99).